Here is a 199-residue protein sequence, read N- to C-terminus: MAKKSTRTTPEDSQASTTDSAATSTASEATQAATSATDDQAEQTTAVDPTQQITDLKAQLDAKDDQLLRAQAEIVNMQNRNKKEQAALLKYDGQALAKDVLPVLDNLERALATPADDEAAQQLKKGVEMVYGHLQDALKKHGVTEVAAAGEKFDPNIHQAVQTVPVDDDHPADTVVQVLQRGYLLKDRTLRPAMVVVAQ.

Residues 1–50 (MAKKSTRTTPEDSQASTTDSAATSTASEATQAATSATDDQAEQTTAVDPT) are disordered. Low complexity predominate over residues 11 to 46 (EDSQASTTDSAATSTASEATQAATSATDDQAEQTTA).

This sequence belongs to the GrpE family. In terms of assembly, homodimer.

The protein localises to the cytoplasm. Participates actively in the response to hyperosmotic and heat shock by preventing the aggregation of stress-denatured proteins, in association with DnaK and GrpE. It is the nucleotide exchange factor for DnaK and may function as a thermosensor. Unfolded proteins bind initially to DnaJ; upon interaction with the DnaJ-bound protein, DnaK hydrolyzes its bound ATP, resulting in the formation of a stable complex. GrpE releases ADP from DnaK; ATP binding to DnaK triggers the release of the substrate protein, thus completing the reaction cycle. Several rounds of ATP-dependent interactions between DnaJ, DnaK and GrpE are required for fully efficient folding. The polypeptide is Protein GrpE (Lactiplantibacillus plantarum (strain ATCC BAA-793 / NCIMB 8826 / WCFS1) (Lactobacillus plantarum)).